Consider the following 833-residue polypeptide: Leucine--tRNA ligase (833 aa).

A 'HIGH' region motif is present at residues 41–52 (PYPSGAGLHVGH). Positions 610–614 (KMSKS) match the 'KMSKS' region motif. Lysine 613 is a binding site for ATP.

This sequence belongs to the class-I aminoacyl-tRNA synthetase family.

The protein localises to the cytoplasm. The catalysed reaction is tRNA(Leu) + L-leucine + ATP = L-leucyl-tRNA(Leu) + AMP + diphosphate. The protein is Leucine--tRNA ligase of Streptococcus pneumoniae (strain Taiwan19F-14).